Here is a 585-residue protein sequence, read N- to C-terminus: Protein FAM151A (585 aa).

The helical transmembrane segment at 14–34 (WVFASITCVSAVAIAAIVLAI) threads the bilayer.

Belongs to the menorin family.

It localises to the membrane. The protein is Protein FAM151A (FAM151A) of Pongo abelii (Sumatran orangutan).